Reading from the N-terminus, the 113-residue chain is Hydrogenase maturation factor HypA (113 aa).

His-2 provides a ligand contact to Ni(2+). 4 residues coordinate Zn(2+): Cys-73, Cys-75, Cys-89, and Cys-92.

The protein belongs to the HypA/HybF family.

In terms of biological role, involved in the maturation of [NiFe] hydrogenases. Required for nickel insertion into the metal center of the hydrogenase. In Methanocella arvoryzae (strain DSM 22066 / NBRC 105507 / MRE50), this protein is Hydrogenase maturation factor HypA.